The following is a 118-amino-acid chain: Acetylcholine receptor subunit beta (118 aa).

The N-terminal stretch at 1–15 is a signal peptide; sequence APTVALLLLCALCSA.

The protein belongs to the ligand-gated ion channel (TC 1.A.9) family. Acetylcholine receptor (TC 1.A.9.1) subfamily. Beta-1/CHRNB1 sub-subfamily. As to quaternary structure, pentamer of two alpha chains, and one each of the beta, delta, and gamma chains.

The protein resides in the postsynaptic cell membrane. The protein localises to the cell membrane. It catalyses the reaction K(+)(in) = K(+)(out). It carries out the reaction Na(+)(in) = Na(+)(out). After binding acetylcholine, the AChR responds by an extensive change in conformation that affects all subunits and leads to opening of an ion-conducting channel across the plasma membrane. This chain is Acetylcholine receptor subunit beta (CHRNB1), found in Gallus gallus (Chicken).